An 876-amino-acid polypeptide reads, in one-letter code: DNA topoisomerase 1 (876 aa).

Positions 3–150 constitute a Toprim domain; that stretch reads KSLVIVESPA…RYKRVVFNEI (148 aa). Position 9 (glutamate 9) interacts with Mg(2+). The interval 37–69 is disordered; that stretch reads LPTAGQTATPTGKAAAASTKKASTTDKEQQKRE. The span at 38–58 shows a compositional bias: low complexity; sequence PTAGQTATPTGKAAAASTKKA. Residues 59-69 are compositionally biased toward basic and acidic residues; it reads STTDKEQQKRE. Aspartate 119 lines the Mg(2+) pocket. Residues 166–582 form the Topo IA-type catalytic domain; it reads NMDGVNAQQA…EFFADFSRDL (417 aa). Positions 200–205 are interaction with DNA; that stretch reads SAGRVQ. Tyrosine 327 (O-(5'-phospho-DNA)-tyrosine intermediate) is an active-site residue. 2 consecutive C4-type zinc fingers follow at residues 668-695 and 717-742; these read CPIC…NPNC and CDKC…NDAC.

Belongs to the type IA topoisomerase family. Monomer. Requires Mg(2+) as cofactor.

The catalysed reaction is ATP-independent breakage of single-stranded DNA, followed by passage and rejoining.. Releases the supercoiling and torsional tension of DNA, which is introduced during the DNA replication and transcription, by transiently cleaving and rejoining one strand of the DNA duplex. Introduces a single-strand break via transesterification at a target site in duplex DNA. The scissile phosphodiester is attacked by the catalytic tyrosine of the enzyme, resulting in the formation of a DNA-(5'-phosphotyrosyl)-enzyme intermediate and the expulsion of a 3'-OH DNA strand. The free DNA strand then undergoes passage around the unbroken strand, thus removing DNA supercoils. Finally, in the religation step, the DNA 3'-OH attacks the covalent intermediate to expel the active-site tyrosine and restore the DNA phosphodiester backbone. This chain is DNA topoisomerase 1, found in Vibrio cholerae serotype O1 (strain ATCC 39315 / El Tor Inaba N16961).